Consider the following 49-residue polypeptide: uncharacterized protein (49 aa).

The chain crosses the membrane as a helical span at residues 16-36 (WTCHTGFYLMILLVLFFMYGF).

The protein localises to the cell membrane. This is an uncharacterized protein from Bacillus subtilis (strain 168).